Here is a 341-residue protein sequence, read N- to C-terminus: Twinfilin-2 (341 aa).

2 consecutive ADF-H domains span residues 1–131 (ATEE…KHLS) and 169–305 (GLAF…DEVH). Residue Lys-6 is modified to N6-acetyllysine. Position 301 is a phosphotyrosine (Tyr-301). Residues 314–341 (AFAKPKGPGGKRGHKRLIRGPGENGDDS) form a disordered region. Over residues 322–331 (GGKRGHKRLI) the composition is skewed to basic residues. Residue Ser-341 is modified to Phosphoserine.

This sequence belongs to the actin-binding proteins ADF family. Twinfilin subfamily. In terms of assembly, interacts with G-actin; ADP-actin form and capping protein (CP). May also be able to interact with TWF1 and phosphoinositides, PI(4,5)P2. When bound to PI(4,5)P2, it is down-regulated. Interacts with MYO7A. Post-translationally, phosphorylated on both serine and threonine residues.

Its subcellular location is the cytoplasm. It localises to the cytoskeleton. The protein localises to the perinuclear region. It is found in the cell projection. The protein resides in the stereocilium. Functionally, actin-binding protein involved in motile and morphological processes. Inhibits actin polymerization, likely by sequestering G-actin. By capping the barbed ends of filaments, it also regulates motility. Seems to play an important role in clathrin-mediated endocytosis and distribution of endocytic organelles. May play a role in regulating the mature length of the middle and short rows of stereocilia. In Pongo abelii (Sumatran orangutan), this protein is Twinfilin-2 (TWF2).